Here is a 350-residue protein sequence, read N- to C-terminus: Deoxyribonuclease-2-alpha (350 aa).

The N-terminal stretch at 1-19 is a signal peptide; it reads MAAPSSLLLAALLWVPAEA. Residues cysteine 22 and cysteine 162 are joined by a disulfide bond. N-linked (GlcNAc...) asparagine glycans are attached at residues asparagine 89, asparagine 215, asparagine 269, and asparagine 293. 2 cysteine pairs are disulfide-bonded: cysteine 270–cysteine 350 and cysteine 311–cysteine 330. Histidine 298 is a catalytic residue.

This sequence belongs to the DNase II family. In terms of tissue distribution, ubiquitous.

Its subcellular location is the lysosome. The enzyme catalyses Endonucleolytic cleavage to nucleoside 3'-phosphates and 3'-phosphooligonucleotide end-products.. Hydrolyzes DNA under acidic conditions with a preference for double-stranded DNA. Plays a major role in the clearance of nucleic acids generated through apoptosis, hence preventing autoinflammation. Necessary for proper fetal development and for definitive erythropoiesis in fetal liver and bone marrow, where it degrades nuclear DNA expelled from erythroid precursor cells. This chain is Deoxyribonuclease-2-alpha (Dnase2), found in Rattus norvegicus (Rat).